Here is a 508-residue protein sequence, read N- to C-terminus: Maturase K (508 aa).

Belongs to the intron maturase 2 family. MatK subfamily.

The protein localises to the plastid. The protein resides in the chloroplast. Usually encoded in the trnK tRNA gene intron. Probably assists in splicing its own and other chloroplast group II introns. This is Maturase K from Coronilla varia (Crown vetch).